The sequence spans 444 residues: Proline--tRNA ligase (444 aa).

This sequence belongs to the class-II aminoacyl-tRNA synthetase family. ProS type 2 subfamily. As to quaternary structure, homodimer.

It is found in the cytoplasm. It catalyses the reaction tRNA(Pro) + L-proline + ATP = L-prolyl-tRNA(Pro) + AMP + diphosphate. Its function is as follows. Catalyzes the attachment of proline to tRNA(Pro) in a two-step reaction: proline is first activated by ATP to form Pro-AMP and then transferred to the acceptor end of tRNA(Pro). This chain is Proline--tRNA ligase, found in Methylobacterium sp. (strain 4-46).